The chain runs to 749 residues: 5-methyltetrahydropteroyltriglutamate--homocysteine methyltransferase (749 aa).

Residues 15–18 (RELK) and Lys-114 contribute to the 5-methyltetrahydropteroyltri-L-glutamate site. Residues 425–427 (IGS) and Glu-478 each bind L-homocysteine. Residues 425-427 (IGS) and Glu-478 contribute to the L-methionine site. Trp-555 is a 5-methyltetrahydropteroyltri-L-glutamate binding site. Residue Asp-593 coordinates L-homocysteine. An L-methionine-binding site is contributed by Asp-593. Residue Glu-599 coordinates 5-methyltetrahydropteroyltri-L-glutamate. Zn(2+) is bound by residues His-636, Cys-638, and Glu-660. His-689 acts as the Proton donor in catalysis. Cys-721 contributes to the Zn(2+) binding site.

The protein belongs to the vitamin-B12 independent methionine synthase family. Zn(2+) is required as a cofactor.

It carries out the reaction 5-methyltetrahydropteroyltri-L-glutamate + L-homocysteine = tetrahydropteroyltri-L-glutamate + L-methionine. Its pathway is amino-acid biosynthesis; L-methionine biosynthesis via de novo pathway; L-methionine from L-homocysteine (MetE route): step 1/1. Catalyzes the transfer of a methyl group from 5-methyltetrahydrofolate to homocysteine resulting in methionine formation. The protein is 5-methyltetrahydropteroyltriglutamate--homocysteine methyltransferase of Streptococcus pneumoniae serotype 19F (strain G54).